We begin with the raw amino-acid sequence, 285 residues long: Probable endonuclease 4 (285 aa).

Residues His-69, His-109, Glu-145, Asp-179, His-182, His-216, Asp-229, His-231, and Glu-261 each contribute to the Zn(2+) site.

The protein belongs to the AP endonuclease 2 family. It depends on Zn(2+) as a cofactor.

The enzyme catalyses Endonucleolytic cleavage to 5'-phosphooligonucleotide end-products.. Functionally, endonuclease IV plays a role in DNA repair. It cleaves phosphodiester bonds at apurinic or apyrimidinic (AP) sites, generating a 3'-hydroxyl group and a 5'-terminal sugar phosphate. This is Probable endonuclease 4 from Escherichia coli O81 (strain ED1a).